The sequence spans 103 residues: Small ribosomal subunit protein uS10 (103 aa).

The protein belongs to the universal ribosomal protein uS10 family. As to quaternary structure, part of the 30S ribosomal subunit.

In terms of biological role, involved in the binding of tRNA to the ribosomes. This chain is Small ribosomal subunit protein uS10, found in Paraburkholderia xenovorans (strain LB400).